The following is a 242-amino-acid chain: 1-(5-phosphoribosyl)-5-[(5-phosphoribosylamino)methylideneamino] imidazole-4-carboxamide isomerase (242 aa).

Asp8 acts as the Proton acceptor in catalysis. The active-site Proton donor is the Asp129.

Belongs to the HisA/HisF family.

The protein localises to the cytoplasm. It carries out the reaction 1-(5-phospho-beta-D-ribosyl)-5-[(5-phospho-beta-D-ribosylamino)methylideneamino]imidazole-4-carboxamide = 5-[(5-phospho-1-deoxy-D-ribulos-1-ylimino)methylamino]-1-(5-phospho-beta-D-ribosyl)imidazole-4-carboxamide. It participates in amino-acid biosynthesis; L-histidine biosynthesis; L-histidine from 5-phospho-alpha-D-ribose 1-diphosphate: step 4/9. In Dictyoglomus turgidum (strain DSM 6724 / Z-1310), this protein is 1-(5-phosphoribosyl)-5-[(5-phosphoribosylamino)methylideneamino] imidazole-4-carboxamide isomerase.